The primary structure comprises 182 residues: Adenine phosphoribosyltransferase (182 aa).

Belongs to the purine/pyrimidine phosphoribosyltransferase family. As to quaternary structure, homodimer.

Its subcellular location is the cytoplasm. It catalyses the reaction AMP + diphosphate = 5-phospho-alpha-D-ribose 1-diphosphate + adenine. The protein operates within purine metabolism; AMP biosynthesis via salvage pathway; AMP from adenine: step 1/1. Catalyzes a salvage reaction resulting in the formation of AMP, that is energically less costly than de novo synthesis. The sequence is that of Adenine phosphoribosyltransferase from Campylobacter jejuni subsp. jejuni serotype O:23/36 (strain 81-176).